We begin with the raw amino-acid sequence, 204 residues long: Demethylsterigmatocystin 6-O-methyltransferase stcP (204 aa).

Residues 48-49 (GG), aspartate 73, 93-94 (DF), and arginine 109 each bind S-adenosyl-L-methionine. Histidine 113 (proton acceptor) is an active-site residue.

It belongs to the class I-like SAM-binding methyltransferase superfamily. Cation-independent O-methyltransferase family.

The catalysed reaction is 6-demethylsterigmatocystin + S-adenosyl-L-methionine = sterigmatocystin + S-adenosyl-L-homocysteine + H(+). It participates in mycotoxin biosynthesis; sterigmatocystin biosynthesis. Its function is as follows. Norsolorinic acid reductase; part of the gene cluster that mediates the biosynthesis of sterigmatocystin (ST), a polyketide-derived furanocoumarin which is part of the most toxic and carcinogenic compounds among the known mycotoxins. The first step in the biosynthesis of sterigmatocystin is the production of hexanoate by the fatty acid synthase (FAS) units stcJ and stcK. The polyketide backbone is assembled by the non-reducing polyketide synthase stcA by condensation of the starter hexanoyl-CoA and 7 malonyl-CoA extender units followed by cyclization and release of norsolorinic acid. Norsolorinic acid is the first stable intermediate in the biosynthesis of sterigmatocystin and is converted into averantin (AVN) by the ketoreductase stcE which reduces the hexanoate ketone to an alcohol. Averantin is then oxidized into 5'-hydroxyaverantin (HAVN) by the cytochrome P450 monooxygenase stcF. 5'-hydroxyaverantin is further converted to 5'-oxyaverantin (OAVN) by the 5'-hydroxyaverantin dehydrogenase stcG. The next step is the conversion of OAVN into averufin (AVF) which is catalyzed by a yet to be identified enzyme. The cytochrome P450 monooxygenase stcB and the flavin-binding monooxygenase stcW are both required for the conversion of averufin to 1-hydroxyversicolorone. The esterase stcI probably catalyzes the formation of versiconal hemiacetal acetate from 1-hydroxyversicolorone. The oxydoreductase stcN then probably catalyzes the biosynthetic step from versiconal to versicolorin B (VERB). The next step is performed by the versicolorin B desaturase stcL to produce versicolorin A (VERA). The ketoreductase stcU and the cytochrome P450 monooxygenase stcS are involved in the conversion of versicolorin A to demethylsterigmatocystin. The Baeyer-Villiger oxidas stcQ and the reductase stcR might be involved in the biosynthetic step from versicolorin A to demethylsterigmatocystin. The final step in the biosynthesis of sterigmatocystin is the methylation of demethylsterigmatocystin catalyzed by the methyltransferase stcP. This chain is Demethylsterigmatocystin 6-O-methyltransferase stcP, found in Emericella nidulans (strain FGSC A4 / ATCC 38163 / CBS 112.46 / NRRL 194 / M139) (Aspergillus nidulans).